The chain runs to 285 residues: Nurim (285 aa).

Residues Met-1 to Ser-16 are Nuclear-facing. The helical transmembrane segment at Leu-17–Phe-44 threads the bilayer. At Leu-45–Gln-74 the chain is on the perinuclear space side. The helical transmembrane segment at Phe-75 to Met-96 threads the bilayer. Topologically, residues Ala-97–Gln-113 are nuclear. Residues Arg-114–Arg-130 form a helical membrane-spanning segment. Residues Phe-131–Trp-149 are Perinuclear space-facing. Residues Ser-150–Leu-180 traverse the membrane as a helical segment. Over Met-181–Leu-207 the chain is Nuclear. The chain crosses the membrane as a helical span at residues Tyr-208–Val-226. Residues Pro-227–Asp-232 lie on the Perinuclear space side of the membrane. Residues Arg-233–Leu-250 traverse the membrane as a helical segment. At Asp-251–Asn-285 the chain is on the nuclear side.

The protein belongs to the nurim family.

The protein resides in the nucleus inner membrane. The polypeptide is Nurim (nrm) (Xenopus laevis (African clawed frog)).